The sequence spans 151 residues: Cytochrome c-type biogenesis protein CcmE 2 (151 aa).

Over Met1–Arg8 the chain is Cytoplasmic. A helical; Signal-anchor for type II membrane protein transmembrane segment spans residues Leu9–Ala29. Topologically, residues Leu30 to Gly151 are periplasmic. Heme contacts are provided by His124 and Tyr128.

Belongs to the CcmE/CycJ family.

The protein localises to the cell inner membrane. Heme chaperone required for the biogenesis of c-type cytochromes. Transiently binds heme delivered by CcmC and transfers the heme to apo-cytochromes in a process facilitated by CcmF and CcmH. This Pseudomonas fluorescens (strain Pf0-1) protein is Cytochrome c-type biogenesis protein CcmE 2.